Consider the following 711-residue polypeptide: Ribosomal RNA large subunit methyltransferase K/L (711 aa).

The region spanning 42–153 (DAQRAVLWSR…KGRATISVDL (112 aa)) is the THUMP domain.

Belongs to the methyltransferase superfamily. RlmKL family.

Its subcellular location is the cytoplasm. It carries out the reaction guanosine(2445) in 23S rRNA + S-adenosyl-L-methionine = N(2)-methylguanosine(2445) in 23S rRNA + S-adenosyl-L-homocysteine + H(+). It catalyses the reaction guanosine(2069) in 23S rRNA + S-adenosyl-L-methionine = N(2)-methylguanosine(2069) in 23S rRNA + S-adenosyl-L-homocysteine + H(+). Specifically methylates the guanine in position 2445 (m2G2445) and the guanine in position 2069 (m7G2069) of 23S rRNA. This Xanthomonas campestris pv. campestris (strain 8004) protein is Ribosomal RNA large subunit methyltransferase K/L.